We begin with the raw amino-acid sequence, 778 residues long: Melanoma-associated antigen D1 (778 aa).

Disordered regions lie at residues P41 to N60, F78 to N123, and K182 to Q333. Y92 carries the phosphotyrosine modification. Polar residues-rich tracts occupy residues P104–T118, N185–D211, T225–S240, N253–G263, and L300–A319. 19 consecutive repeat copies span residues W296–A301, W302–G307, W308–A313, W332–A337, W338–I343, W344–I349, W350–I355, W356–V361, W362–V367, W368–A373, W374–G379, W380–G385, W386–G391, W392–D397, W398–D403, W404–D409, W410–D415, W416–D421, and W422–D427. Positions W296–P444 are 22 X 6 AA tandem repeats of W-[PQ]-X-P-X-X. A disordered region spans residues N376–L412. The span at P377–D397 shows a compositional bias: low complexity. The segment covering W398 to L412 has biased composition (pro residues). A 20; approximate repeat occupies W428 to D432. A run of 2 repeats spans residues W433 to D438 and W439 to P444. Residues Q440–R455 show a composition bias toward low complexity. The segment at Q440–R466 is disordered. Residues L471–A669 enclose the MAGE domain.

In terms of assembly, interacts with DLX5, DLX7 and MSX2 and forms homomultimers. Interacts with UNC5A. Interacts with TRIM28 and PJA1. Interacts with NGFR/p75NTR and RORA. Expressed in bone marrow stromal cells from both multiple myeloma patients and healthy donors. Seems to be ubiquitously expressed.

The protein localises to the cytoplasm. It localises to the cell membrane. The protein resides in the nucleus. Functionally, involved in the apoptotic response after nerve growth factor (NGF) binding in neuronal cells. Inhibits cell cycle progression, and facilitates NGFR-mediated apoptosis. May act as a regulator of the function of DLX family members. May enhance ubiquitin ligase activity of RING-type zinc finger-containing E3 ubiquitin-protein ligases. Proposed to act through recruitment and/or stabilization of the Ubl-conjugating enzyme (E2) at the E3:substrate complex. Plays a role in the circadian rhythm regulation. May act as RORA co-regulator, modulating the expression of core clock genes such as BMAL1 and NFIL3, induced, or NR1D1, repressed. This chain is Melanoma-associated antigen D1 (MAGED1), found in Homo sapiens (Human).